Reading from the N-terminus, the 493-residue chain is MTVFSGVNKIEFEGTFEGIGKDVVMSQMIRALQKHFPSIRDKNYEFSLFLHIFQRYVLENTSITHDLVCDKIRLPIIDEVVELDDIKNYGLLEGKLLSKLAILKLTGKANPIIGKESPLFEVKNGMSSLDVIVRQTQNLNVRYNSDVPLIFMTSLETESQVSNFLEEHYSSSKVRWKTVVQSSFPQIDKDRLLPIDLQINSHENDFWYPCGTGNLTDTLYFSGELDKLIAQGKEILFVSNVDNLGATGDLNILNFIINEKIEYLVEVVERTANVSNTGVLATYKGKLRSVYYNCLSNESASTCRIVNTNNIWIDLKKLKVLIESNSLNLPIHSSESKITHKNEEIECLQFKTQLVDCIAFFPNSRVLKVSRDRFLPLRTCKDLFLLKSTLYDLDSNGTFNLYPLKFGLLPSIDLGDEFATYETFKIGVPDIPNILELEHLTVMGNVFFGRNITLKGTVIIICDENDVITVPDGSILENVTIWHKSQLEDMNGY.

Residues 105-108 (LTGK), glutamine 181, glycine 211, and aspartate 242 each bind UTP. 107-108 (GK) lines the substrate pocket. 240–242 (NVD) lines the substrate pocket.

It belongs to the UDPGP type 1 family.

The catalysed reaction is alpha-D-glucose 1-phosphate + UTP + H(+) = UDP-alpha-D-glucose + diphosphate. Functionally, plays a central role as a glucosyl donor in cellular metabolic pathways. This chain is Probable UTP--glucose-1-phosphate uridylyltransferase, found in Saccharomyces cerevisiae (strain ATCC 204508 / S288c) (Baker's yeast).